Here is a 390-residue protein sequence, read N- to C-terminus: GTPase Obg (390 aa).

One can recognise an Obg domain in the interval 1-159; it reads MKFVDEASIL…RELLLELMLL (159 aa). Residues 127–147 form a disordered region; that stretch reads NTRFKSSVNRTPRQKTNGTPG. A compositionally biased stretch (polar residues) spans 129-145; that stretch reads RFKSSVNRTPRQKTNGT. The OBG-type G domain maps to 160-333; that stretch reads ADVGMLGMPN…LCWDVMTFII (174 aa). GTP contacts are provided by residues 166–173, 191–195, 213–216, 283–286, and 314–316; these read GMPNAGKS, FTTLV, DIPG, NKID, and SAA. Mg(2+)-binding residues include S173 and T193.

Belongs to the TRAFAC class OBG-HflX-like GTPase superfamily. OBG GTPase family. Monomer. The cofactor is Mg(2+).

The protein resides in the cytoplasm. In terms of biological role, an essential GTPase which binds GTP, GDP and possibly (p)ppGpp with moderate affinity, with high nucleotide exchange rates and a fairly low GTP hydrolysis rate. Plays a role in control of the cell cycle, stress response, ribosome biogenesis and in those bacteria that undergo differentiation, in morphogenesis control. The protein is GTPase Obg of Escherichia fergusonii (strain ATCC 35469 / DSM 13698 / CCUG 18766 / IAM 14443 / JCM 21226 / LMG 7866 / NBRC 102419 / NCTC 12128 / CDC 0568-73).